The sequence spans 72 residues: Protein SlyX (72 aa).

The segment at 53–72 (KSSQSSMLARPEDETPPPHY) is disordered.

Belongs to the SlyX family.

The polypeptide is Protein SlyX (Proteus mirabilis (strain HI4320)).